We begin with the raw amino-acid sequence, 393 residues long: NAD(P)H-quinone oxidoreductase subunit H, chloroplastic (393 aa).

The protein belongs to the complex I 49 kDa subunit family. In terms of assembly, NDH is composed of at least 16 different subunits, 5 of which are encoded in the nucleus.

The protein resides in the plastid. It is found in the chloroplast thylakoid membrane. It carries out the reaction a plastoquinone + NADH + (n+1) H(+)(in) = a plastoquinol + NAD(+) + n H(+)(out). It catalyses the reaction a plastoquinone + NADPH + (n+1) H(+)(in) = a plastoquinol + NADP(+) + n H(+)(out). Its function is as follows. NDH shuttles electrons from NAD(P)H:plastoquinone, via FMN and iron-sulfur (Fe-S) centers, to quinones in the photosynthetic chain and possibly in a chloroplast respiratory chain. The immediate electron acceptor for the enzyme in this species is believed to be plastoquinone. Couples the redox reaction to proton translocation, and thus conserves the redox energy in a proton gradient. This is NAD(P)H-quinone oxidoreductase subunit H, chloroplastic from Oenothera biennis (German evening primrose).